The primary structure comprises 299 residues: Troponin T, cardiac muscle (299 aa).

The span at 1–71 shows a compositional bias: acidic residues; that stretch reads MSDAEEEVVE…EARDAEDGPV (71 aa). 2 disordered regions span residues 1 to 97 and 137 to 220; these read MSDA…GERV and DRIE…EKKK. Ser-2 bears the N-acetylserine mark. The residue at position 2 (Ser-2) is a Phosphoserine. 2 stretches are compositionally biased toward basic and acidic residues: residues 137-185 and 204-220; these read DRIE…DEAR and QTERKSGKRQTEREKKK. Thr-205 carries the phosphothreonine; by PKC/PRKCA modification. Residue Ser-209 is modified to Phosphoserine; by PKC/PRKCA. Thr-214 is subject to Phosphothreonine; by PKC/PRKCA and RAF1. Phosphothreonine; by PKC/PRKCA is present on Thr-295.

Belongs to the troponin T family. In terms of processing, phosphorylation at Thr-214 by PRKCA induces significant reduction in myofilament calcium sensitivity and actomyosin ATPase activity.

Functionally, troponin T is the tropomyosin-binding subunit of troponin, the thin filament regulatory complex which confers calcium-sensitivity to striated muscle actomyosin ATPase activity. This is Troponin T, cardiac muscle (Tnnt2) from Rattus norvegicus (Rat).